The sequence spans 410 residues: Lissencephaly-1 homolog (410 aa).

The region spanning 7–39 (QRDELNRAIADYLRSNGYEEAYSVFKKEAELDM) is the LisH domain. Positions 56-82 (TSVIRLQKKVMELESKLNEAKEEFTSG) form a coiled coil. 7 WD repeats span residues 106–147 (GHRS…RTLK), 148–187 (GHTDSVQDISFDHSGKLLASCSADMTIKLWDFQGFECIRT), 190–229 (GHDHNVSSVAIMPNGDHIVSASRDKTIKMWEVQTGYCVKT), 232–271 (GHREWVRMVRPNQDGTLIASCSNDQTVRVWVVATKECKAE), 274–333 (EHEH…CLMT), 336–377 (GHDN…KTLN), and 379–410 (HEHFVTSLDFHKTAPYVVTGSVDQTVKVWECR).

It belongs to the WD repeat LIS1/nudF family. In terms of assembly, can self-associate. Component of the cytosolic PAF-AH (I) heterotetrameric enzyme, which is composed of PAFAH1B1 (beta), PAFAH1B2 (alpha2) and PAFAH1B3 (alpha1) subunits. The catalytic activity of the enzyme resides in the alpha1 (PAFAH1B3) and alpha2 (PAFAH1B2) subunits, whereas the beta subunit (PAFAH1B1) has regulatory activity. Trimer formation is not essential for the catalytic activity. Interacts with dynein, dynactin, nde1 and ndel1.

It is found in the cytoplasm. Its subcellular location is the cytoskeleton. The protein resides in the microtubule organizing center. The protein localises to the centrosome. Functionally, regulatory subunit (beta subunit) of the cytosolic type I platelet-activating factor (PAF) acetylhydrolase (PAF-AH (I)), an enzyme that catalyzes the hydrolyze of the acetyl group at the sn-2 position of PAF and its analogs and participates in the PAF inactivation. Positively regulates the activity of the minus-end directed microtubule motor protein dynein. May enhance dynein-mediated microtubule sliding by targeting dynein to the microtubule plus end. Required for several dynein- and microtubule-dependent processes such as the maintenance of Golgi integrity, the peripheral transport of microtubule fragments and the coupling of the nucleus and centrosome. May be required for proliferation of neuronal precursors and neuronal migration. This chain is Lissencephaly-1 homolog (pafah1b1), found in Xenopus tropicalis (Western clawed frog).